Here is a 142-residue protein sequence, read N- to C-terminus: Large ribosomal subunit protein uL11 (142 aa).

It belongs to the universal ribosomal protein uL11 family. As to quaternary structure, part of the ribosomal stalk of the 50S ribosomal subunit. Interacts with L10 and the large rRNA to form the base of the stalk. L10 forms an elongated spine to which L12 dimers bind in a sequential fashion forming a multimeric L10(L12)X complex. In terms of processing, one or more lysine residues are methylated.

Functionally, forms part of the ribosomal stalk which helps the ribosome interact with GTP-bound translation factors. This chain is Large ribosomal subunit protein uL11, found in Pelotomaculum thermopropionicum (strain DSM 13744 / JCM 10971 / SI).